Here is a 239-residue protein sequence, read N- to C-terminus: Caffeoyl-CoA O-methyltransferase 1 (239 aa).

Lys13 provides a ligand contact to substrate. S-adenosyl-L-methionine contacts are provided by residues Thr55, Glu77, 79–80, Ser85, Asp103, and Ala132; that span reads GV. Asp155 serves as a coordination point for substrate. Residue Asp155 participates in a divalent metal cation binding. Position 157 (Asp157) interacts with S-adenosyl-L-methionine. A divalent metal cation contacts are provided by Asp181 and Asn182. Asn186 is a substrate binding site.

Belongs to the class I-like SAM-binding methyltransferase superfamily. Cation-dependent O-methyltransferase family. CCoAMT subfamily. As to quaternary structure, monomer. Mg(2+) serves as cofactor. In terms of tissue distribution, mostly expressed in the bottom and middle parts of the stems.

The enzyme catalyses (E)-caffeoyl-CoA + S-adenosyl-L-methionine = (E)-feruloyl-CoA + S-adenosyl-L-homocysteine + H(+). It participates in aromatic compound metabolism; phenylpropanoid biosynthesis. In terms of biological role, methylates caffeoyl-CoA to feruloyl-CoA and 5-hydroxyferuloyl-CoA to sinapoyl-CoA. Plays a role in the synthesis of feruloylated polysaccharides. Involved in the reinforcement of the plant cell wall. Also involved in the responding to wounding or pathogen challenge by the increased formation of cell wall-bound ferulic acid polymers. The sequence is that of Caffeoyl-CoA O-methyltransferase 1 (CCOAOMT1) from Nicotiana tabacum (Common tobacco).